The sequence spans 98 residues: Large ribosomal subunit protein uL23 (98 aa).

This sequence belongs to the universal ribosomal protein uL23 family. In terms of assembly, part of the 50S ribosomal subunit. Contacts protein L29, and trigger factor when it is bound to the ribosome.

In terms of biological role, one of the early assembly proteins it binds 23S rRNA. One of the proteins that surrounds the polypeptide exit tunnel on the outside of the ribosome. Forms the main docking site for trigger factor binding to the ribosome. This Rickettsia canadensis (strain McKiel) protein is Large ribosomal subunit protein uL23.